We begin with the raw amino-acid sequence, 82 residues long: Sec-independent protein translocase protein TatA (82 aa).

A helical transmembrane segment spans residues 1 to 21 (MGIFDWKHWIVILIVVVLVFG). The segment at 43–82 (VNTEEDDKKEQPAAQPAQPLNQPHTIDAQAQKVEEPARKD) is disordered.

It belongs to the TatA/E family. The Tat system comprises two distinct complexes: a TatABC complex, containing multiple copies of TatA, TatB and TatC subunits, and a separate TatA complex, containing only TatA subunits. Substrates initially bind to the TatABC complex, which probably triggers association of the separate TatA complex to form the active translocon.

It is found in the cell inner membrane. Part of the twin-arginine translocation (Tat) system that transports large folded proteins containing a characteristic twin-arginine motif in their signal peptide across membranes. TatA could form the protein-conducting channel of the Tat system. The chain is Sec-independent protein translocase protein TatA from Pseudomonas paraeruginosa (strain DSM 24068 / PA7) (Pseudomonas aeruginosa (strain PA7)).